Reading from the N-terminus, the 250-residue chain is Coproheme decarboxylase (250 aa).

Fe-coproporphyrin III contacts are provided by residues R131, 145-149 (YPMNK), H172, and Q185. Y145 is an active-site residue.

The protein belongs to the ChdC family. Type 1 subfamily. Fe-coproporphyrin III is required as a cofactor.

The enzyme catalyses Fe-coproporphyrin III + 2 H2O2 + 2 H(+) = heme b + 2 CO2 + 4 H2O. The catalysed reaction is Fe-coproporphyrin III + H2O2 + H(+) = harderoheme III + CO2 + 2 H2O. It carries out the reaction harderoheme III + H2O2 + H(+) = heme b + CO2 + 2 H2O. The protein operates within porphyrin-containing compound metabolism; protoheme biosynthesis. Involved in coproporphyrin-dependent heme b biosynthesis. Catalyzes the decarboxylation of Fe-coproporphyrin III (coproheme) to heme b (protoheme IX), the last step of the pathway. The reaction occurs in a stepwise manner with a three-propionate intermediate. The polypeptide is Coproheme decarboxylase (Staphylococcus aureus (strain MRSA252)).